The chain runs to 111 residues: Class I hydrophobin 10 (111 aa).

Residues 1-17 (MLFNTFVVTALASLAAA) form the signal peptide. Intrachain disulfides connect Cys30/Cys90, Cys37/Cys84, Cys38/Cys71, and Cys91/Cys104.

It belongs to the fungal hydrophobin family. In terms of assembly, self-assembles to form functional amyloid fibrils called rodlets. Self-assembly into fibrillar rodlets occurs spontaneously at hydrophobic:hydrophilic interfaces and the rodlets further associate laterally to form amphipathic monolayers.

The protein resides in the secreted. The protein localises to the cell wall. Functionally, aerial growth, conidiation, and dispersal of filamentous fungi in the environment rely upon a capability of their secreting small amphipathic proteins called hydrophobins (HPBs) with low sequence identity. Class I can self-assemble into an outermost layer of rodlet bundles on aerial cell surfaces, conferring cellular hydrophobicity that supports fungal growth, development and dispersal; whereas Class II form highly ordered films at water-air interfaces through intermolecular interactions but contribute nothing to the rodlet structure. The polypeptide is Class I hydrophobin 10 (Pleurotus ostreatus (strain PC15) (Oyster mushroom)).